A 334-amino-acid polypeptide reads, in one-letter code: Protein-methionine-sulfoxide reductase catalytic subunit MsrP (334 aa).

The segment at residues 1 to 44 (MKKNQFLKESDVTAESVFFMKRRQVLKALGISAAALSLPHAAHA) is a signal peptide (tat-type signal). Mo-molybdopterin-binding positions include Asn-88, 91–92 (YE), Cys-146, Thr-181, Asn-233, Arg-238, and 249–251 (GIK).

The protein belongs to the MsrP family. In terms of assembly, heterodimer of a catalytic subunit (MsrP) and a heme-binding subunit (MsrQ). Mo-molybdopterin serves as cofactor. In terms of processing, predicted to be exported by the Tat system. The position of the signal peptide cleavage has not been experimentally proven.

Its subcellular location is the periplasm. The enzyme catalyses L-methionyl-[protein] + a quinone + H2O = L-methionyl-(S)-S-oxide-[protein] + a quinol. The catalysed reaction is L-methionyl-[protein] + a quinone + H2O = L-methionyl-(R)-S-oxide-[protein] + a quinol. Its function is as follows. Part of the MsrPQ system that repairs oxidized periplasmic proteins containing methionine sulfoxide residues (Met-O), using respiratory chain electrons. Thus protects these proteins from oxidative-stress damage caused by reactive species of oxygen and chlorine generated by the host defense mechanisms. MsrPQ is essential for the maintenance of envelope integrity under bleach stress, rescuing a wide series of structurally unrelated periplasmic proteins from methionine oxidation, including the primary periplasmic chaperone SurA and the lipoprotein Pal. The catalytic subunit MsrP is non-stereospecific, being able to reduce both (R-) and (S-) diastereoisomers of methionine sulfoxide. This is Protein-methionine-sulfoxide reductase catalytic subunit MsrP from Escherichia coli O157:H7.